Consider the following 59-residue polypeptide: Small ribosomal subunit protein eS30 (59 aa).

Residues 1–35 (KVHGSLARAGKVRGQTPKVAKQEKKKKKTGRAKRR) form a disordered region. Residues 23-35 (EKKKKKTGRAKRR) show a composition bias toward basic residues. N6-succinyllysine is present on Lys-51.

This sequence belongs to the eukaryotic ribosomal protein eS30 family.

This is Small ribosomal subunit protein eS30 (Fau) from Mus spicilegus (Steppe mouse).